Consider the following 98-residue polypeptide: NADH-ubiquinone oxidoreductase chain 4L (98 aa).

Transmembrane regions (helical) follow at residues 1–21 (MPSI…GVLI), 26–46 (LMSS…LVSL), and 61–81 (IILL…LVMV).

It belongs to the complex I subunit 4L family. As to quaternary structure, core subunit of respiratory chain NADH dehydrogenase (Complex I) which is composed of 45 different subunits.

It localises to the mitochondrion inner membrane. It carries out the reaction a ubiquinone + NADH + 5 H(+)(in) = a ubiquinol + NAD(+) + 4 H(+)(out). Functionally, core subunit of the mitochondrial membrane respiratory chain NADH dehydrogenase (Complex I) which catalyzes electron transfer from NADH through the respiratory chain, using ubiquinone as an electron acceptor. Part of the enzyme membrane arm which is embedded in the lipid bilayer and involved in proton translocation. This Galago senegalensis (Northern lesser bushbaby) protein is NADH-ubiquinone oxidoreductase chain 4L (MT-ND4L).